Here is a 322-residue protein sequence, read N- to C-terminus: Pilin gene-inverting protein (322 aa).

In terms of biological role, may be the site-specific invertase required for pilin gene inversion. Moraxella can express either a Q or I pilin; the inversion of 2 kb of DNA determines which pilin is expressed. This Moraxella lacunata protein is Pilin gene-inverting protein (piv).